A 250-amino-acid polypeptide reads, in one-letter code: Pyrroloquinoline-quinone synthase (250 aa).

The protein belongs to the PqqC family.

The catalysed reaction is 6-(2-amino-2-carboxyethyl)-7,8-dioxo-1,2,3,4,7,8-hexahydroquinoline-2,4-dicarboxylate + 3 O2 = pyrroloquinoline quinone + 2 H2O2 + 2 H2O + H(+). It participates in cofactor biosynthesis; pyrroloquinoline quinone biosynthesis. Its function is as follows. Ring cyclization and eight-electron oxidation of 3a-(2-amino-2-carboxyethyl)-4,5-dioxo-4,5,6,7,8,9-hexahydroquinoline-7,9-dicarboxylic-acid to PQQ. This is Pyrroloquinoline-quinone synthase from Xanthomonas oryzae pv. oryzae (strain PXO99A).